The chain runs to 257 residues: Imidazole glycerol phosphate synthase subunit HisF (257 aa).

Catalysis depends on residues aspartate 12 and aspartate 131.

It belongs to the HisA/HisF family. As to quaternary structure, heterodimer of HisH and HisF.

It is found in the cytoplasm. The enzyme catalyses 5-[(5-phospho-1-deoxy-D-ribulos-1-ylimino)methylamino]-1-(5-phospho-beta-D-ribosyl)imidazole-4-carboxamide + L-glutamine = D-erythro-1-(imidazol-4-yl)glycerol 3-phosphate + 5-amino-1-(5-phospho-beta-D-ribosyl)imidazole-4-carboxamide + L-glutamate + H(+). It participates in amino-acid biosynthesis; L-histidine biosynthesis; L-histidine from 5-phospho-alpha-D-ribose 1-diphosphate: step 5/9. In terms of biological role, IGPS catalyzes the conversion of PRFAR and glutamine to IGP, AICAR and glutamate. The HisF subunit catalyzes the cyclization activity that produces IGP and AICAR from PRFAR using the ammonia provided by the HisH subunit. The sequence is that of Imidazole glycerol phosphate synthase subunit HisF from Saccharophagus degradans (strain 2-40 / ATCC 43961 / DSM 17024).